The following is an 84-amino-acid chain: UPF0386 protein NGR_c10980 (84 aa).

It belongs to the UPF0386 family.

The protein is UPF0386 protein NGR_c10980 of Sinorhizobium fredii (strain NBRC 101917 / NGR234).